Consider the following 459-residue polypeptide: Protein FAM90A27P (459 aa).

The span at 1-10 (MARHSVHHQA) shows a compositional bias: basic residues. Disordered stretches follow at residues 1-41 (MARH…ESRV), 74-136 (SHKE…WKEP), 153-239 (HTTK…ALQP), and 259-459 (PDAD…SDSD). The span at 125 to 136 (PQEKMQEAWKEP) shows a compositional bias: basic and acidic residues. Residues 184–194 (HNDSPQLSTCG) show a composition bias toward polar residues. Residues 341 to 353 (KATAETAATKTAT) are compositionally biased toward low complexity. Over residues 415-427 (PPENSASAQSPRF) the composition is skewed to polar residues.

Belongs to the FAM90 family.

In Homo sapiens (Human), this protein is Protein FAM90A27P (FAM90A27P).